The chain runs to 435 residues: Deoxybrevianamide E synthase (435 aa).

The interval 1 to 28 (MTAPELRAPAGHPQEPPARSSPAQALSS) is disordered. Residue Glu-96 participates in brevianamide F binding. The dimethylallyl diphosphate site is built by Arg-110, Lys-195, Tyr-197, Lys-265, Tyr-267, Tyr-354, Tyr-419, and Tyr-423.

Belongs to the tryptophan dimethylallyltransferase family. In terms of assembly, monomer.

The catalysed reaction is brevianamide F + dimethylallyl diphosphate = deoxybrevianamide E + diphosphate. It participates in alkaloid biosynthesis. Deoxybrevianamide E synthase; part of the gene cluster that mediates the biosynthesis of notoamide, a fungal indole alkaloid that belongs to a family of natural products containing a characteristic bicyclo[2.2.2]diazaoctane core. The first step of notoamide biosynthesis involves coupling of L-proline and L-tryptophan by the bimodular NRPS notE', to produce cyclo-L-tryptophan-L-proline called brevianamide F. The reverse prenyltransferase notF' then acts as a deoxybrevianamide E synthase and converts brevianamide F to deoxybrevianamide E via reverse prenylation at C-2 of the indole ring leading to the bicyclo[2.2.2]diazaoctane core. Deoxybrevianamide E is further hydroxylated at C-6 of the indole ring, likely catalyzed by the cytochrome P450 monooxygenase notG', to yield 6-hydroxy-deoxybrevianamide E. 6-hydroxy-deoxybrevianamide E is a specific substrate of the prenyltransferase notC' for normal prenylation at C-7 to produce 6-hydroxy-7-prenyl-deoxybrevianamide, also called notoamide S. As the proposed pivotal branching point in notoamide biosynthesis, notoamide S can be diverted to notoamide E through an oxidative pyran ring closure putatively catalyzed by either notH' cytochrome P450 monooxygenase or the notD' FAD-linked oxidoreductase. This step would be followed by an indole 2,3-epoxidation-initiated pinacol-like rearrangement catalyzed by the notB' FAD-dependent monooxygenase leading to the formation of notoamide C and notoamide D. On the other hand notoamide S is converted to notoamide T by notH' (or notD'), a bifunctional oxidase that also functions as the intramolecular Diels-Alderase responsible for generation of (-)-notoamide T. To generate antipodal (+)-notoaminide T, notH (or notD) in Aspergillus strain MF297-2 is expected to catalyze a Diels-Alder reaction leading to the opposite stereochemistry. The remaining oxidoreductase notD' (or notH') likely catalyzes the oxidative pyran ring formation to yield (-)-stephacidin A. The FAD-dependent monooxygenase notI' is highly similar to notB' and is predicted to catalyze a similar conversion from (-)-stephacidin A to (+)-notoamide B via the 2,3-epoxidation of (-)-stephacidin A followed by a pinacol-type rearrangement. Finally, it remains unclear which enzyme could be responsible for the final hydroxylation steps leading to notoamide A and sclerotiamide. In Aspergillus versicolor, this protein is Deoxybrevianamide E synthase.